The primary structure comprises 553 residues: Putative transport protein YidE (553 aa).

Helical transmembrane passes span 4 to 24 (IALT…IGNV), 28 to 48 (GIGL…HFVS), 65 to 85 (FGLI…FFAS), 95 to 115 (LFAV…HKLF), and 158 to 178 (MSYA…MWML). RCK C-terminal domains are found at residues 191-276 (QQHE…VIGQ) and 279-361 (DTSL…VLGN). Helical transmembrane passes span 371-391 (MLPV…PVFV), 393-413 (GFPA…ALIL), 439-459 (IVLF…NTLV), 464-484 (LSWI…VGIL), 493-513 (YLTM…LAFA), and 533-553 (LVMF…WSIG).

This sequence belongs to the AAE transporter (TC 2.A.81) family. YidE subfamily.

It localises to the cell membrane. The polypeptide is Putative transport protein YidE (Shigella flexneri serotype 5b (strain 8401)).